Consider the following 236-residue polypeptide: MHDHSLHSGHDHGLGPGSFHDRGAPHARGDLRRRAFTVGVGGPVGSGKTALVLALCRALRDSRSLGVVTNDIFTREDAEFLVRNDALPAERIRAVETGGCPHAAIREDVTANLLALEELTEAHRPEILFCESGGDNLAAHFSRELADYTIYVIDVAGGDKVPRKGGPGITQADLLVVNKTDLATAVGADLDVMARDAARMRGDGPVVFAQVTRGVGVPEIAGHVLHAYRHAVGAPH.

The interval 1-26 (MHDHSLHSGHDHGLGPGSFHDRGAPH) is disordered. 42–49 (GPVGSGKT) serves as a coordination point for GTP.

This sequence belongs to the SIMIBI class G3E GTPase family. UreG subfamily. In terms of assembly, homodimer. UreD, UreF and UreG form a complex that acts as a GTP-hydrolysis-dependent molecular chaperone, activating the urease apoprotein by helping to assemble the nickel containing metallocenter of UreC. The UreE protein probably delivers the nickel.

The protein localises to the cytoplasm. Functionally, facilitates the functional incorporation of the urease nickel metallocenter. This process requires GTP hydrolysis, probably effectuated by UreG. This is Urease accessory protein UreG from Anaeromyxobacter sp. (strain Fw109-5).